Here is a 235-residue protein sequence, read N- to C-terminus: MKTVLDVLKGKLIVSCQALENEPLHSPFIMSRMALAAAQGGAAAIRANSVVDIAAIKQQVSLPVIGIIKRDYPGSEVFITATLKEIDELMTVNPEIIALDATARPRPNGQTLESFVGQIRARYPSVLLMADIATLAEAKEAQALGFDCVGTTLYGYTAETQGHSLPENDCEFLRDVVAAVSIPVVAEGNVDTPERAARCLALGAHTVVVGGAITRPQQITTRFVAAIEAHSIDRA.

It belongs to the NanE family.

The catalysed reaction is an N-acyl-D-glucosamine 6-phosphate = an N-acyl-D-mannosamine 6-phosphate. The protein operates within amino-sugar metabolism; N-acetylneuraminate degradation; D-fructose 6-phosphate from N-acetylneuraminate: step 3/5. Functionally, converts N-acetylmannosamine-6-phosphate (ManNAc-6-P) to N-acetylglucosamine-6-phosphate (GlcNAc-6-P). The polypeptide is Putative N-acetylmannosamine-6-phosphate 2-epimerase (Enterobacter sp. (strain 638)).